A 384-amino-acid chain; its full sequence is GTPase Obg (384 aa).

Positions 1-159 constitute an Obg domain; sequence MKFIDEAKIE…RSLQLELKVL (159 aa). Positions 20-46 are disordered; that stretch reads ATSFRREKFVPRGGPDGGDGGKGGSVW. Residues 33 to 43 are compositionally biased toward gly residues; the sequence is GPDGGDGGKGG. Residues 160-348 enclose the OBG-type G domain; the sequence is ADVGLLGMPN…LVHQINQYLI (189 aa). Residues 166-173, 191-195, 213-216, 284-287, and 329-331 each bind GTP; these read GMPNAGKS, FTTLH, DIPG, NKLD, and SAL. Mg(2+) contacts are provided by Ser173 and Thr193. Residues 364–384 are disordered; it reads ATNVEIAEQQPKTDTGVFKPE.

It belongs to the TRAFAC class OBG-HflX-like GTPase superfamily. OBG GTPase family. In terms of assembly, monomer. Mg(2+) is required as a cofactor.

The protein localises to the cytoplasm. An essential GTPase which binds GTP, GDP and possibly (p)ppGpp with moderate affinity, with high nucleotide exchange rates and a fairly low GTP hydrolysis rate. Plays a role in control of the cell cycle, stress response, ribosome biogenesis and in those bacteria that undergo differentiation, in morphogenesis control. The polypeptide is GTPase Obg (Neisseria meningitidis serogroup A / serotype 4A (strain DSM 15465 / Z2491)).